The sequence spans 1142 residues: Golgi apparatus protein 1 (1142 aa).

The signal sequence occupies residues 1-29; sequence MAPCGRVRSRCPGPALLLLLALAARPALA. Residues 30 to 1108 are Extracellular-facing; it reads GPPAAALQAG…MQVMTSPSKN (1079 aa). Positions 45 to 60 are enriched in low complexity; the sequence is AGQPAQGAAPGAAGPR. Residues 45-69 are disordered; that stretch reads AGQPAQGAAPGAAGPRGARGGGGGS. 16 Cys-rich GLG1 repeats span residues 81-112, 113-175, 178-241, 249-309, 310-376, 377-436, 438-500, 501-567, 572-631, 633-691, 692-751, 759-819, 821-874, 875-942, 943-998, and 1004-1064; these read CRED…EPDN, EISS…GNIT, QCHQ…VKEA, QVSD…FEES, MSEK…HRGR, QVSS…RGEK, NVGL…YTEK, MVED…YRTE, RLSR…DDLV, DCRD…KHQK, EMNE…RNDT, RVSL…KQLS, RCHQ…KNSE, VMDP…ADQR, LSPD…ECLK, and IKTE…EDKR. N-linked (GlcNAc...) asparagine glycosylation is found at Asn128 and Asn173. The N-linked (GlcNAc...) asparagine glycan is linked to Asn544. N-linked (GlcNAc...) asparagine glycosylation is found at Asn640 and Asn749. The chain crosses the membrane as a helical span at residues 1109–1129; it reads YILSVITVGICVLFLIGLMCG. Residues 1130 to 1142 lie on the Cytoplasmic side of the membrane; that stretch reads RITKRVTRELKDR.

Fucosylation is essential for binding to E-selectin. In terms of processing, N-glycosylated. Contains sialic acid residues.

The protein localises to the golgi apparatus membrane. It localises to the golgi outpost. Its subcellular location is the cytoplasm. The protein resides in the cytoskeleton. It is found in the microtubule organizing center. In terms of biological role, binds fibroblast growth factor and E-selectin (cell-adhesion lectin on endothelial cells mediating the binding of neutrophils). Binds fibroblast growth factor (FGF). May be involved in intracellular FGF trafficking and the regulation of cellular responses to FGFS. This chain is Golgi apparatus protein 1 (GLG1), found in Gallus gallus (Chicken).